A 353-amino-acid polypeptide reads, in one-letter code: MSEMFDVNAAVYPFPPKPVPLDDAQKAFYREKIKILLKQRNAVMVAHYYTDPEIQALAEETGGCVADSLEMARFGSNHPASTLLVAGVRFMGETAKILSPEKRVLMPTLNAECSLDLGCPEEEFNAFCDSHPDRTVVVYANTSAAVKARADWVVTSSIAVELIEHLDSLGEKIIWAPDRHLGSYVQKQTGADMLCWQGACIVHDEFKTQALMRMKALYPNAAILVHPESPQAVVSLADAVGSTSQLIQAAKTLPNSQLIVATDRGIFYKMQQACPDKELFEAPTAGEGATCRSCAHCPWMAMNGLKAIADGLEHGGVLHEIHVDAALRQKALIPLNRMLDFAAELRVQVKGNA.

Iminosuccinate-binding residues include His-47 and Ser-68. Cys-113 serves as a coordination point for [4Fe-4S] cluster. Residues 139 to 141 (YAN) and Ser-156 each bind iminosuccinate. Cys-200 serves as a coordination point for [4Fe-4S] cluster. Iminosuccinate contacts are provided by residues 226 to 228 (HPE) and Thr-243. [4Fe-4S] cluster is bound at residue Cys-297.

This sequence belongs to the quinolinate synthase family. Type 1 subfamily. Requires [4Fe-4S] cluster as cofactor.

The protein localises to the cytoplasm. The enzyme catalyses iminosuccinate + dihydroxyacetone phosphate = quinolinate + phosphate + 2 H2O + H(+). It participates in cofactor biosynthesis; NAD(+) biosynthesis; quinolinate from iminoaspartate: step 1/1. Functionally, catalyzes the condensation of iminoaspartate with dihydroxyacetone phosphate to form quinolinate. This chain is Quinolinate synthase, found in Serratia proteamaculans (strain 568).